The sequence spans 247 residues: Pyridoxine 5'-phosphate synthase (247 aa).

Asn-7 contacts 3-amino-2-oxopropyl phosphate. Residue 9–10 (DH) participates in 1-deoxy-D-xylulose 5-phosphate binding. Arg-18 contributes to the 3-amino-2-oxopropyl phosphate binding site. Catalysis depends on His-43, which acts as the Proton acceptor. 1-deoxy-D-xylulose 5-phosphate-binding residues include Arg-45 and His-50. Residue Glu-70 is the Proton acceptor of the active site. 1-deoxy-D-xylulose 5-phosphate is bound at residue Thr-100. Residue His-190 is the Proton donor of the active site. 3-amino-2-oxopropyl phosphate contacts are provided by residues Gly-191 and 212–213 (GH).

The protein belongs to the PNP synthase family. As to quaternary structure, homooctamer; tetramer of dimers.

Its subcellular location is the cytoplasm. The enzyme catalyses 3-amino-2-oxopropyl phosphate + 1-deoxy-D-xylulose 5-phosphate = pyridoxine 5'-phosphate + phosphate + 2 H2O + H(+). It participates in cofactor biosynthesis; pyridoxine 5'-phosphate biosynthesis; pyridoxine 5'-phosphate from D-erythrose 4-phosphate: step 5/5. Functionally, catalyzes the complicated ring closure reaction between the two acyclic compounds 1-deoxy-D-xylulose-5-phosphate (DXP) and 3-amino-2-oxopropyl phosphate (1-amino-acetone-3-phosphate or AAP) to form pyridoxine 5'-phosphate (PNP) and inorganic phosphate. This is Pyridoxine 5'-phosphate synthase from Synechococcus sp. (strain WH7803).